The primary structure comprises 231 residues: Probable glutathione S-transferase GSTU1 (231 aa).

A GST N-terminal domain is found at lysine 5–proline 84. Residues serine 15, lysine 42, isoleucine 56, and glutamate 68–serine 69 contribute to the glutathione site. The GST C-terminal domain occupies alanine 97–phenylalanine 220.

Belongs to the GST superfamily. Tau family.

It catalyses the reaction RX + glutathione = an S-substituted glutathione + a halide anion + H(+). In terms of biological role, conjugation of reduced glutathione to a wide number of exogenous and endogenous hydrophobic electrophiles. The chain is Probable glutathione S-transferase GSTU1 (GSTU1) from Oryza sativa subsp. japonica (Rice).